We begin with the raw amino-acid sequence, 341 residues long: MVGEMETKENPNPTPDYLMQLMNDKKLMSSLPNFCGIFNHLERLLDEEISRVRKDMYNDTLNGSTEKRSAELPDAVGPIVQLQEKLYVPVKEYPDFNFVGRILGPRGLTAKQLEAETGCKIMVRGKGSMRDKKKEEQNRGKPNWEHLNEDLHVLITVEDAQNRAEIKLKRAVEEVKKLLVPAAEGEDSLKKMQLMELAILNGTYRDANIKSPALAFSLAATAQAAPRIITGPAPVLPPAALRTPTPAGPTIMPLIRQIQTAVMPNGTPHPTAAIVPPGPEAGLIYTPYEYPYTLAPATSILEYPIEPSGVLGAVATKVRRHDMRVHPYQRIVTADRAATGN.

The interval 11–82 is qua1 domain; involved in homodimerization; that stretch reads PNPTPDYLMQ…PDAVGPIVQL (72 aa). The KH domain occupies 87–153; that stretch reads YVPVKEYPDF…WEHLNEDLHV (67 aa). The segment at 182 to 213 is qua2 domain; involved in RNA binding; it reads AAEGEDSLKKMQLMELAILNGTYRDANIKSPA. Serine 188 carries the phosphoserine modification. Residue arginine 227 is modified to Omega-N-methylarginine. Arginine 242 is subject to Asymmetric dimethylarginine; by CARM1; alternate. At arginine 242 the chain carries Omega-N-methylarginine; alternate. Arginine 256 carries the omega-N-methylarginine modification. The SH3-binding motif lies at 276–279; the sequence is PPGP. The short motif at 324-330 is the Nuclear localization signal element; it reads RVHPYQR.

This sequence belongs to the quaking family. In terms of assembly, homodimer; does not require RNA to homodimerize. Able to heterodimerize with BICC1. In terms of processing, methylated by PRMT1. Tyrosine phosphorylated at its C-terminus, probably by FYN. Phosphorylation leads to decreased mRNA-binding affinity, affecting transport and/or stabilization of MBP mRNA. Post-translationally, ubiquitinated by RNF6 in macrophages, leading to its degradation. Present in myelinating oligodendrocytes (at protein level).

It localises to the nucleus. Its subcellular location is the cytoplasm. Functionally, RNA reader protein, which recognizes and binds specific RNAs, thereby regulating RNA metabolic processes, such as pre-mRNA splicing, circular RNA (circRNA) formation, mRNA export, mRNA stability and/or translation. Involved in various cellular processes, such as mRNA storage into stress granules, apoptosis, lipid deposition, interferon response, glial cell fate and development. Binds to the 5'-NACUAAY-N(1,20)-UAAY-3' RNA core sequence. Acts as a mRNA modification reader that specifically recognizes and binds mRNA transcripts modified by internal N(7)-methylguanine (m7G). Promotes the formation of circular RNAs (circRNAs) during the epithelial to mesenchymal transition and in cardiomyocytes: acts by binding to sites flanking circRNA-forming exons. CircRNAs are produced by back-splicing circularization of pre-mRNAs. Plays a central role in myelinization via 3 distinct mechanisms. First, acts by protecting and promoting stability of target mRNAs such as MBP, SIRT2 and CDKN1B, which promotes oligodendrocyte differentiation. Second, participates in mRNA transport by regulating the nuclear export of MBP mRNA. Finally, indirectly regulates mRNA splicing of MAG pre-mRNA during oligodendrocyte differentiation by acting as a negative regulator of MAG exon 12 alternative splicing: acts by binding to HNRNPA1 mRNA splicing factor, preventing its translation. Involved in microglia differentiation and remyelination by regulating microexon alternative splicing of the Rho GTPase pathway. Involved in macrophage differentiation: promotes monocyte differentiation by regulating pre-mRNA splicing in naive peripheral blood monocytes. Acts as an important regulator of muscle development: required for the contractile function of cardiomyocytes by regulating alternative splicing of cardiomyocyte transcripts. Acts as a negative regulator of thermogenesis by decreasing stability, nuclear export and translation of mRNAs encoding PPARGC1A and UCP1. Also required for visceral endoderm function and blood vessel development. May also play a role in smooth muscle development. In addition to its RNA-binding activity, also acts as a nuclear transcription coactivator for SREBF2/SREBP2. The protein is KH domain-containing RNA-binding protein QKI of Rattus norvegicus (Rat).